Reading from the N-terminus, the 295-residue chain is MSATVLDGKAAAAAVKADLKERVAALRERGVVPGLGTVLVGDDPGSASYVRGKHRDCAEVGIASIQVELPATATQGEIESEIAQLNANPDCTGFIVQLPLPAGIDANRILEQVDPDKDADGLHPTNLGRLVLRVREEITSPLPCTPRGVIDLLLRHDVPLDGAEVVVVGRGVTVGRPIGLLLTRRHPNATVTLCHTGTRDLESHLRRADVIVAAAGVAGLVTKENVKPGAAVLDVGVSRVLDPATGKSKLAGDVALDVAEVAGFVAPNPGGVGPMTRALLLTNVVESAERAAGLR.

NADP(+) contacts are provided by residues 169–171, threonine 196, and valine 237; that span reads GRG.

It belongs to the tetrahydrofolate dehydrogenase/cyclohydrolase family. As to quaternary structure, homodimer.

It carries out the reaction (6R)-5,10-methylene-5,6,7,8-tetrahydrofolate + NADP(+) = (6R)-5,10-methenyltetrahydrofolate + NADPH. It catalyses the reaction (6R)-5,10-methenyltetrahydrofolate + H2O = (6R)-10-formyltetrahydrofolate + H(+). It functions in the pathway one-carbon metabolism; tetrahydrofolate interconversion. Catalyzes the oxidation of 5,10-methylenetetrahydrofolate to 5,10-methenyltetrahydrofolate and then the hydrolysis of 5,10-methenyltetrahydrofolate to 10-formyltetrahydrofolate. This Kineococcus radiotolerans (strain ATCC BAA-149 / DSM 14245 / SRS30216) protein is Bifunctional protein FolD.